Reading from the N-terminus, the 325-residue chain is Homeobox protein Hox-A1a (325 aa).

The short motif at 187–192 (TFDWMK) is the Antp-type hexapeptide element. 2 disordered regions span residues 194–215 (KRNP…PNTV) and 264–325 (RMKQ…YPSN). A DNA-binding region (homeobox) is located at residues 212–271 (PNTVRTNFTTKQLTELEKEFHFNKYLTRARRVEIAAALQLNETQVKIWFQNRRMKQKKRE). The segment covering 285-300 (SGERNQEKVEDGESEK) has biased composition (basic and acidic residues). Low complexity predominate over residues 301 to 317 (SVSAPSTPSPTSSTVSS).

This sequence belongs to the Antp homeobox family. Labial subfamily.

The protein resides in the nucleus. Its function is as follows. Sequence-specific transcription factor which is part of a developmental regulatory system that provides cells with specific positional identities on the anterior-posterior axis. This is Homeobox protein Hox-A1a (hoxa1a) from Takifugu rubripes (Japanese pufferfish).